The following is a 433-amino-acid chain: Ribosomal RNA small subunit methyltransferase B (433 aa).

Residues 254-260 (CAAPGGK), Asp-277, Asp-303, and Asp-322 each bind S-adenosyl-L-methionine. The active-site Nucleophile is Cys-375.

It belongs to the class I-like SAM-binding methyltransferase superfamily. RsmB/NOP family.

The protein resides in the cytoplasm. It carries out the reaction cytidine(967) in 16S rRNA + S-adenosyl-L-methionine = 5-methylcytidine(967) in 16S rRNA + S-adenosyl-L-homocysteine + H(+). Specifically methylates the cytosine at position 967 (m5C967) of 16S rRNA. This chain is Ribosomal RNA small subunit methyltransferase B, found in Sodalis glossinidius (strain morsitans).